The chain runs to 62 residues: Large ribosomal subunit protein bL28 (62 aa).

The tract at residues 1 to 26 (MARKCYVTGKSPKSGNNRSHALNKTK) is disordered. Positions 11–20 (SPKSGNNRSH) are enriched in polar residues.

This sequence belongs to the bacterial ribosomal protein bL28 family.

This Exiguobacterium sibiricum (strain DSM 17290 / CCUG 55495 / CIP 109462 / JCM 13490 / 255-15) protein is Large ribosomal subunit protein bL28.